The chain runs to 130 residues: Large ribosomal subunit protein bL12 (130 aa).

Belongs to the bacterial ribosomal protein bL12 family. In terms of assembly, homodimer. Part of the ribosomal stalk of the 50S ribosomal subunit. Forms a multimeric L10(L12)X complex, where L10 forms an elongated spine to which 2 to 4 L12 dimers bind in a sequential fashion. Binds GTP-bound translation factors.

Functionally, forms part of the ribosomal stalk which helps the ribosome interact with GTP-bound translation factors. Is thus essential for accurate translation. The protein is Large ribosomal subunit protein bL12 of Synechococcus sp. (strain RCC307).